Consider the following 20-residue polypeptide: Haemoporin (20 aa).

Residues 1 to 20 are disordered; it reads AAVPEAAAEATAEAAPVSEF.

Homopentamer. Forms a cylindrical structure with a central pore. Detected in the hemolymph.

The protein resides in the secreted. The protein is Haemoporin of Aplysia californica (California sea hare).